A 320-amino-acid polypeptide reads, in one-letter code: Zinc finger Ran-binding domain-containing protein 2 (320 aa).

Phosphoserine is present on Ser9. The RanBP2-type 1 zinc-finger motif lies at 9–40; that stretch reads SDGDWICPDKKCGNVNFARRTSCNRCGREKTT. N6-acetyllysine is present on residues Lys18, Lys54, and Lys92. Residues 65–94 form a RanBP2-type 2 zinc finger; sequence SANDWQCKTCSNVNWARRSECNMCNTPKYA. The interval 117-320 is disordered; that stretch reads REESDGEYDE…QVIGENTKQP (204 aa). Phosphoserine is present on residues Ser120, Ser153, Ser181, Ser188, and Ser193. Residues 150-163 are compositionally biased toward acidic residues; that stretch reads DKESEGEEEDEDED. A required for nuclear targeting region spans residues 151-320; that stretch reads KESEGEEEDE…QVIGENTKQP (170 aa). The span at 196-210 shows a compositional bias: basic residues; that stretch reads KKSNRRSRSKSRSSH. Composition is skewed to low complexity over residues 211-224 and 232-242; these read SRSS…SSSR and RSSSSSQSRSR. Basic residues predominate over residues 251–273; that stretch reads SRGSKSRSSSRSHRGSSSPRKRS.

The protein belongs to the ZRANB2 family. In terms of assembly, interacts with the C-terminal half of SNRP70/U1-70K, the Arg/Ser-rich domain of AKAP17A as well as with U2AF1 and CLK1. Phosphorylated on Ser-310 upon DNA damage, probably by ATM or ATR.

It is found in the nucleus. Functionally, splice factor required for alternative splicing of TRA2B/SFRS10 transcripts. Binds to ssRNA containing the consensus sequence 5'-AGGUAA-3'. May interfere with constitutive 5'-splice site selection. The sequence is that of Zinc finger Ran-binding domain-containing protein 2 from Pongo abelii (Sumatran orangutan).